The following is a 187-amino-acid chain: Calcium and integrin-binding family member 2 (187 aa).

EF-hand domains are found at residues 66 to 101 (RENPFKERIVEAFSEDGEGNLTFNDFVDMFSVLCES), 103 to 138 (PRELKANYAFKIYDFNTDNFICKEDLEMTLARLTKS), and 144 to 179 (EVVLVCDKVIEEADLDGDGKLGFADFEDMIAKAPDF). Positions 116, 118, 120, 127, 157, 159, 161, 163, and 168 each coordinate Ca(2+).

Monomer. Homodimer. Interacts with WHRN and MYO7A. Interacts with ITGA2B (via C-terminus cytoplasmic tail region); this interaction is stabilized/increased in a calcium and magnesium-dependent manner. Interacts with ITGA7 (via C-terminus cytoplasmic tail region); this interaction is stabilized/increased in a calcium and magnesium-dependent manner. Interacts with TMC1. Interacts with TMC2. Interacts with PIEZO1. As to expression, expressed in inner and outer segments of photoreceptor cells, as well as in the pigmented epithelium. Also observed in the inner and outer plexiform layers and in the ganglion cell layer (at protein level). Expressed in sensory hair cell stereocilia, with expression mainly at the basal body of the kinocilium and in the hair bundle stereocilia; and the apical surface of hair cells (at protein level). Located in the tip region of the stereocilia and at the apical surface of hair cells around the cuticular plate (at protein level). Not expressed in the hair bundles of the vestibular hair cells. Strongly expressed in skeletal muscles, brain, kidney and liver. Expressed in the skeletal muscle, retina and cochlea. Expressed in megakaryocytes and endothelial cells. Expressed in heart, spleen, lung, and inner ear. In the inner ear, expressed in the vestibule, basilar membrane and spiral ganglion cells. Expressed in the supporting cells in both the organ of Corti and the vestibular sensory epithelia.

Its subcellular location is the cytoplasm. It localises to the cell projection. The protein localises to the stereocilium. The protein resides in the photoreceptor inner segment. It is found in the cilium. Its subcellular location is the photoreceptor outer segment. It localises to the cell membrane. The protein localises to the sarcolemma. Its function is as follows. Calcium- and integrin-binding protein that plays a role in intracellular calcium homeostasis. Acts as an auxiliary subunit of the sensory mechanoelectrical transduction (MET) channel in hair cells. Essential for mechanoelectrical transduction (MET) currents in auditory hair cells and thereby required for hearing. Regulates the function of hair cell mechanotransduction by controlling the distribution of transmembrane channel-like proteins TMC1 and TMC2, and by regulating the function of the MET channels in hair cells. Required for the maintenance of auditory hair cell stereocilia bundle morphology and function and for hair-cell survival in the cochlea. Critical for proper photoreceptor cell maintenance and function. Plays a role in intracellular calcium homeostasis by decreasing ATP-induced calcium release. Seems to be dispensable for vestibular functions. In Mus musculus (Mouse), this protein is Calcium and integrin-binding family member 2 (Cib2).